The following is a 940-amino-acid chain: MKRQSVSEIREIFLNYFKDKAHAVVPSSSLLPAGDPTLLFTTAGMVQFKPLFTGAVELPYTRATSCQKCLRTTDLEVVGKTERHCTFFEMLGNFSFGDYFKEEAIDYALDCSVNHLGFDKEKIWVTVYTDDDEAEKIWITKGIPKERITRLGKKDNFWGPAGDSGACGPCSELYLDRGVEKGGPDCATSGTCRPGCDCDRFLEFWNIVFNQFNQDTEGNLHPLKQTGIDTGSGLERVALLLQGADSVYDTNELRKIISFYEELSGIKYDDVITLSKMPTQKNNTARIAANQKAAFRVVTDHIRSVLFSIGDGIYPDRTGRGYVIRRLIRRATLFGRKLNFKEPFLYKLVDKVVEIYKPRYPELGKNSAAIQKTILAEEELFLKTLELGLEKIETLVAKTKTSGKTIFSGADAFLLYGTYGFPAEMTEEIVAEQGLDFDKKGFQEELEKDRQLSRESWKANKVSLMTGQSVEKTEFLGYSSLSGKGNIIHLFNENKPAGALKEGQAGAIVLNKTPFYPEGGGQVGDTGFLRQGKNVFKVLDTQKENDVILHFGEVLSGEFSIAQELEAEVEAARRERLRFHHSGTHLLNGALRNLLGDHVLQKGSVVSPEYLRFDFSHPSALTSKEIRKIESWVNESIRKNYPVVTKELPIEDAKKIGAVATFGEKYGDRVRVVQMGDASVEFCGGTHVSHTGEIGYFFIKKESSPGAGNRRIEGVCGPAVIETFQNRFAELTESVQNLNLKIKSELDNEGSKILVNSNVPGPDEIREKLEKEGATAVTFFRDLSEEIASQIEESTSAFLKMKKSLESRDFENNASVIEKVFASSMDTGVGKIVSAIFDDKDPNSLKGLSDNLKVREKNLLVILGSKNADNASVVITCSSQLVSKGIHCGDLVRTVCEMLGGKGGGKPDMAQGGGKEKQNLESAISFAIQLAKQTLTGEKV.

Zn(2+) contacts are provided by H581, H585, C683, and H687.

It belongs to the class-II aminoacyl-tRNA synthetase family. Zn(2+) serves as cofactor.

The protein localises to the cytoplasm. The enzyme catalyses tRNA(Ala) + L-alanine + ATP = L-alanyl-tRNA(Ala) + AMP + diphosphate. Its function is as follows. Catalyzes the attachment of alanine to tRNA(Ala) in a two-step reaction: alanine is first activated by ATP to form Ala-AMP and then transferred to the acceptor end of tRNA(Ala). Also edits incorrectly charged Ser-tRNA(Ala) and Gly-tRNA(Ala) via its editing domain. The polypeptide is Alanine--tRNA ligase (Leptospira borgpetersenii serovar Hardjo-bovis (strain JB197)).